The sequence spans 291 residues: Venom metalloproteinase inhibitor DM43 (291 aa).

2 Ig-like V-type domains span residues 22–79 and 114–171; these read TNVT…ILTS and GLET…PASA. A glycan (N-linked (GlcNAc...) asparagine) is linked at Asn-23. 2 disulfide bridges follow: Cys-28–Cys-74 and Cys-121–Cys-163. N-linked (GlcNAc...) asparagine glycosylation is found at Asn-156, Asn-160, and Asn-175. Residues 191-288 enclose the Ig-like V-type 3 domain; it reads PKANFYILND…DSNVLELDLS (98 aa). Cys-213 and Cys-265 are oxidised to a cystine.

As to quaternary structure, homodimer. Post-translationally, N-glycosylated. In terms of tissue distribution, blood and milk.

Functionally, metalloproteinase inhibitor. This Didelphis marsupialis (Southern opossum) protein is Venom metalloproteinase inhibitor DM43.